A 622-amino-acid polypeptide reads, in one-letter code: Arginine--tRNA ligase (622 aa).

Residues alanine 127–histidine 137 carry the 'HIGH' region motif.

Belongs to the class-I aminoacyl-tRNA synthetase family.

Its subcellular location is the cytoplasm. The enzyme catalyses tRNA(Arg) + L-arginine + ATP = L-arginyl-tRNA(Arg) + AMP + diphosphate. This Ignicoccus hospitalis (strain KIN4/I / DSM 18386 / JCM 14125) protein is Arginine--tRNA ligase.